Consider the following 277-residue polypeptide: Thiamine thiazole synthase (277 aa).

NAD(+)-binding positions include serine 36, glycine 63, valine 126, and 152-154 (HVD). Fe cation contacts are provided by aspartate 154 and histidine 169. Methionine 230 serves as a coordination point for NAD(+). Arginine 240 contacts glycine.

This sequence belongs to the THI4 family. As to quaternary structure, homooctamer; tetramer of dimers. It depends on Fe(2+) as a cofactor.

It catalyses the reaction hydrogen sulfide + glycine + NAD(+) = ADP-5-ethyl-4-methylthiazole-2-carboxylate + nicotinamide + 3 H2O + H(+). It participates in cofactor biosynthesis; thiamine diphosphate biosynthesis. In terms of biological role, involved in the biosynthesis of the thiazole moiety of thiamine. Catalyzes the conversion of NAD and glycine to adenosine diphosphate 5-(2-hydroxyethyl)-4-methylthiazole-2-carboxylate (ADT), an adenylated thiazole intermediate, using free sulfide as a source of sulfur. This is Thiamine thiazole synthase from Fervidobacterium nodosum (strain ATCC 35602 / DSM 5306 / Rt17-B1).